Consider the following 441-residue polypeptide: Transcriptional regulatory protein ZraR (441 aa).

The Response regulatory domain occupies 7–121 (DILVVDDDIS…NLQATLEKAL (115 aa)). The residue at position 56 (aspartate 56) is a 4-aspartylphosphate. Residues 141–370 (MVGKSPAMQH…LENAVERAVV (230 aa)) form the Sigma-54 factor interaction domain. Glycine 172, threonine 173, arginine 329, and arginine 359 together coordinate ATP. The H-T-H motif DNA-binding region spans 421–440 (KTEAARQLGITRKTLLAKLS).

In terms of assembly, monomer. In terms of processing, phosphorylated by ZraS.

The protein localises to the cytoplasm. With respect to regulation, activity of the ZraS/ZraR two-component system is repressed by the zinc-bound form of ZraP, which probably interacts with the periplasmic region of ZraS. Its function is as follows. Part of the Zra signaling pathway, an envelope stress response (ESR) system composed of the periplasmic accessory protein ZraP, the histidine kinase ZraS and the transcriptional regulator ZraR. The ZraPSR system contributes to antibiotic resistance and is important for membrane integrity in the presence of membrane-targeting biocides. ZraR is a member of the two-component regulatory system ZraS/ZraR. When activated by ZraS, acts in conjunction with sigma-54 to regulate the expression of zraP in the presence of high Zn(2+) or Pb(2+) concentrations. Also positively autoregulates the expression of the zraSR operon. Binds to a region within the zraP-zraSR intergenic region that is characterized by two inverted repeats separated by a 14 bp spacer. In addition, controls a regulon of genes of diverse functions that may be critical to maintain envelope integrity and cell survival under stressful conditions. The system has no direct role in zinc or copper resistance. The protein is Transcriptional regulatory protein ZraR of Escherichia coli (strain K12).